The primary structure comprises 529 residues: Peptide chain release factor 3 (529 aa).

In terms of domain architecture, tr-type G spans 11-280 (NKRRTFAIIS…GLTKWAPTPL (270 aa)). Residues 20–27 (SHPDAGKT), 88–92 (DTPGH), and 142–145 (NKCD) each bind GTP.

Belongs to the TRAFAC class translation factor GTPase superfamily. Classic translation factor GTPase family. PrfC subfamily.

It localises to the cytoplasm. In terms of biological role, increases the formation of ribosomal termination complexes and stimulates activities of RF-1 and RF-2. It binds guanine nucleotides and has strong preference for UGA stop codons. It may interact directly with the ribosome. The stimulation of RF-1 and RF-2 is significantly reduced by GTP and GDP, but not by GMP. This Pseudoalteromonas translucida (strain TAC 125) protein is Peptide chain release factor 3.